A 108-amino-acid chain; its full sequence is Ribonuclease P protein component 4 (108 aa).

The Zn(2+) site is built by Cys-67, Cys-70, Cys-93, and Cys-96.

The protein belongs to the eukaryotic/archaeal RNase P protein component 4 family. As to quaternary structure, consists of a catalytic RNA component and at least 4-5 protein subunits. It depends on Zn(2+) as a cofactor.

It localises to the cytoplasm. The enzyme catalyses Endonucleolytic cleavage of RNA, removing 5'-extranucleotides from tRNA precursor.. Its function is as follows. Part of ribonuclease P, a protein complex that generates mature tRNA molecules by cleaving their 5'-ends. This chain is Ribonuclease P protein component 4, found in Methanococcoides burtonii (strain DSM 6242 / NBRC 107633 / OCM 468 / ACE-M).